Reading from the N-terminus, the 244-residue chain is DNA repair protein RecO (244 aa).

It belongs to the RecO family.

Its function is as follows. Involved in DNA repair and RecF pathway recombination. The polypeptide is DNA repair protein RecO (Caldicellulosiruptor saccharolyticus (strain ATCC 43494 / DSM 8903 / Tp8T 6331)).